Consider the following 474-residue polypeptide: Dipeptidase A (474 aa).

Residue C6 is part of the active site.

It belongs to the peptidase C69 family. In terms of assembly, homooctamer.

The enzyme catalyses an L-aminoacyl-L-amino acid + H2O = 2 an L-alpha-amino acid. Its activity is regulated as follows. Inhibited by Zn(2+), Cu(2+), Ca(2+) and Cd(2+). Hydrolyzes a wide range of dipeptides but unable to hydrolyze dipeptides containing proline. Highest activity against Met-Ala. In Lactobacillus helveticus (Lactobacillus suntoryeus), this protein is Dipeptidase A (pepDA).